The following is a 544-amino-acid chain: Terpene synthase 9 (544 aa).

3 residues coordinate Mg(2+): Asp296, Asp300, and Glu449. The short motif at 296–300 (DDTFD) is the DDXXD motif element.

This sequence belongs to the terpene synthase family. Tpsa subfamily. Mg(2+) is required as a cofactor. The cofactor is Mn(2+).

The catalysed reaction is (2E,6E)-farnesyl diphosphate = (1E,4E)-germacrene B + diphosphate. It carries out the reaction (2E)-geranyl diphosphate = terpinolene + diphosphate. The enzyme catalyses (2E)-geranyl diphosphate = limonene + diphosphate. It catalyses the reaction (2E)-geranyl diphosphate = beta-myrcene + diphosphate. The catalysed reaction is (2Z,6Z)-farnesyl diphosphate = germacrene A + diphosphate. It carries out the reaction (2Z,6Z)-farnesyl diphosphate = alpha-humulene + diphosphate. It participates in secondary metabolite biosynthesis; terpenoid biosynthesis. In terms of biological role, sesquiterpene synthase involved in the biosynthesis of volatile compounds. Mediates the conversion of (2E,6E)-farnesyl diphosphate (FPP) into (1E,4E)-germacrene B, but also smaller amounts of germacrene A and C, and of (2Z,6Z)-farnesyl diphosphate ((ZZ)-FPP) into alpha-humulene, germacrene A and germacrene B. Can act with a low efficiency as a monoterpene synthase with geranyl diphosphate (GPP) as substrate, thus producing beta-myrcene, limonene and terpinolene. The sequence is that of Terpene synthase 9 from Solanum habrochaites (Wild tomato).